Here is a 343-residue protein sequence, read N- to C-terminus: MDPKEVLKRLTEGVSLSQEEAKELADLIMEGSIPEPLVAGILVALKMKGETPDEIIGFVNSMRQHALKLDLRNTLDTAGTGGDGIGTINVSTATALAVSSVFPVAKHGNRAASSRSGSADFLESLGYNIQVPPEKAKDLLSRNNFVFLFAQLYHPSMKNVAPVRKVLGVRTIFNLLGPLTNPAGSERQVMGVYSLPFMRKLAEAALKLGYVKLVLVHGEPGLDEVSPQGKTYITEVTGSKVEEYTYDFSEIIGQPVPVSRLTTTDPLDSVRRVLMASMGRDEAVEKFIRINVSVALYTAGLVSDFKDGFELSEELVRKLPDRIETLVRDNGDPSKIKAIKGSL.

Residues glycine 79, 82-83 (GD), threonine 87, 89-92 (NVST), 106-114 (KHGNRAASS), and serine 118 contribute to the 5-phospho-alpha-D-ribose 1-diphosphate site. Glycine 79 is a binding site for anthranilate. Residue serine 91 participates in Mg(2+) binding. Asparagine 109 contacts anthranilate. Arginine 164 contributes to the anthranilate binding site. Residues aspartate 223 and glutamate 224 each contribute to the Mg(2+) site.

It belongs to the anthranilate phosphoribosyltransferase family. In terms of assembly, homodimer. Requires Mg(2+) as cofactor.

It carries out the reaction N-(5-phospho-beta-D-ribosyl)anthranilate + diphosphate = 5-phospho-alpha-D-ribose 1-diphosphate + anthranilate. It functions in the pathway amino-acid biosynthesis; L-tryptophan biosynthesis; L-tryptophan from chorismate: step 2/5. Its function is as follows. Catalyzes the transfer of the phosphoribosyl group of 5-phosphorylribose-1-pyrophosphate (PRPP) to anthranilate to yield N-(5'-phosphoribosyl)-anthranilate (PRA). In Metallosphaera sedula (strain ATCC 51363 / DSM 5348 / JCM 9185 / NBRC 15509 / TH2), this protein is Anthranilate phosphoribosyltransferase.